We begin with the raw amino-acid sequence, 485 residues long: Cobyric acid synthase (485 aa).

The GATase cobBQ-type domain occupies 250–436 (RVLVACPILP…VHGLLANADL (187 aa)). C332 functions as the Nucleophile in the catalytic mechanism. The active site involves H428.

It belongs to the CobB/CobQ family. CobQ subfamily.

Its pathway is cofactor biosynthesis; adenosylcobalamin biosynthesis. In terms of biological role, catalyzes amidations at positions B, D, E, and G on adenosylcobyrinic A,C-diamide. NH(2) groups are provided by glutamine, and one molecule of ATP is hydrogenolyzed for each amidation. The chain is Cobyric acid synthase from Rhizorhabdus wittichii (strain DSM 6014 / CCUG 31198 / JCM 15750 / NBRC 105917 / EY 4224 / RW1) (Sphingomonas wittichii).